Consider the following 535-residue polypeptide: BAR/IMD domain-containing adapter protein 2 (535 aa).

In terms of domain architecture, IMD spans 1-250 (MSLSRSEEMH…AQLMQQMANS (250 aa)). The stretch at 1-251 (MSLSRSEEMH…QLMQQMANSN (251 aa)) forms a coiled coil. Phosphoserine occurs at positions 262, 324, 326, and 337. Residues 308 to 370 (SEDYNPWADR…TLPRSSSMAA (63 aa)) are disordered. Residues 321 to 335 (QPKSLSPPQSQSKLS) show a composition bias toward low complexity. A Phosphothreonine modification is found at threonine 341. Serine 347 carries the phosphoserine modification. Polar residues predominate over residues 349 to 368 (TPKNSYATTENKTLPRSSSM). Threonine 361 bears the Phosphothreonine mark. A phosphoserine mark is found at serine 367, serine 385, serine 396, and serine 455. Positions 375-438 (NGRMRVKAIF…PFSYTRVLDS (64 aa)) constitute an SH3 domain. The segment at 445–486 (HMSLQQGKSSSTGNLLDKDDLALPPPDYGTSSRAFPSQTAGT) is disordered. Composition is skewed to polar residues over residues 447–458 (SLQQGKSSSTGN) and 473–486 (GTSS…TAGT).

As to quaternary structure, homodimer. Interacts with CDC42 and RAC1 that have been activated by GTP binding. Binds TIAM1. Interacts with ATN1, ADGRB1, DIAPH1, EPS8, SHANK1, SHANK2, SHANK3, WASF1 and WASF2. Interacts with ENAH after recruitment of CDC42. Phosphorylated on tyrosine residues by INSR in response to insulin treatment. As to expression, ubiquitous.

The protein resides in the cytoplasm. Its subcellular location is the membrane. The protein localises to the cell projection. It is found in the filopodium. It localises to the ruffle. The protein resides in the cytoskeleton. Functionally, adapter protein that links membrane-bound small G-proteins to cytoplasmic effector proteins. Necessary for CDC42-mediated reorganization of the actin cytoskeleton and for RAC1-mediated membrane ruffling. Involved in the regulation of the actin cytoskeleton by WASF family members and the Arp2/3 complex. Plays a role in neurite growth. Acts syngeristically with ENAH to promote filipodia formation. Plays a role in the reorganization of the actin cytoskeleton in response to bacterial infection. Participates in actin bundling when associated with EPS8, promoting filopodial protrusions. The protein is BAR/IMD domain-containing adapter protein 2 (Baiap2) of Rattus norvegicus (Rat).